The chain runs to 201 residues: Testis-expressed protein 38 (201 aa).

The chain crosses the membrane as a helical span at residues 3 to 23 (ISLCIGFLGLCSVLIGSCILF).

Its subcellular location is the membrane. This chain is Testis-expressed protein 38 (Tex38), found in Mus musculus (Mouse).